A 404-amino-acid chain; its full sequence is Dihydroorotase (404 aa).

Positions 57 and 59 each coordinate Zn(2+). Substrate is bound by residues 59–61 (HLR) and Asn91. Residues Lys135, His164, His204, and Asp272 each coordinate Zn(2+). An N6-carboxylysine modification is found at Lys135. Asp272 is a catalytic residue. Substrate-binding positions include His276 and 286 to 287 (AG).

Belongs to the metallo-dependent hydrolases superfamily. DHOase family. Class I DHOase subfamily. It depends on Zn(2+) as a cofactor.

It catalyses the reaction (S)-dihydroorotate + H2O = N-carbamoyl-L-aspartate + H(+). Its pathway is pyrimidine metabolism; UMP biosynthesis via de novo pathway; (S)-dihydroorotate from bicarbonate: step 3/3. In terms of biological role, catalyzes the reversible cyclization of carbamoyl aspartate to dihydroorotate. This Pyrococcus abyssi (strain GE5 / Orsay) protein is Dihydroorotase.